Here is a 215-residue protein sequence, read N- to C-terminus: Probable phosphoglycerate mutase GpmB (215 aa).

Substrate contacts are provided by residues 8 to 15, 21 to 22, Arg-58, Arg-60, 82 to 85, and 151 to 152; these read RHGESEWN, QG, ELHM, and GI. His-9 (tele-phosphohistidine intermediate) is an active-site residue. Glu-82 acts as the Proton donor/acceptor in catalysis.

Belongs to the phosphoglycerate mutase family. GpmB subfamily.

It catalyses the reaction (2R)-2-phosphoglycerate = (2R)-3-phosphoglycerate. It functions in the pathway carbohydrate degradation; glycolysis; pyruvate from D-glyceraldehyde 3-phosphate: step 3/5. The protein is Probable phosphoglycerate mutase GpmB of Photorhabdus laumondii subsp. laumondii (strain DSM 15139 / CIP 105565 / TT01) (Photorhabdus luminescens subsp. laumondii).